A 60-amino-acid chain; its full sequence is Cytotoxin sagitoxin (60 aa).

4 cysteine pairs are disulfide-bonded: C3-C21, C14-C38, C42-C53, and C54-C59.

It belongs to the three-finger toxin family. Short-chain subfamily. Type IA cytotoxin sub-subfamily. Monomer in solution; Homodimer and oligomer (homohexamer) in the presence of negatively charged lipids forming a pore with a size ranging between 20 and 30 Angstroms. In terms of tissue distribution, expressed by the venom gland.

It localises to the secreted. Its subcellular location is the target cell membrane. In terms of biological role, shows cytolytic activity on many different cells by forming pore in lipid membranes. In vivo, increases heart rate or kill the animal by cardiac arrest. In addition, it binds to heparin with high affinity, interacts with Kv channel-interacting protein 1 (KCNIP1) in a calcium-independent manner, and binds to integrin alpha-V/beta-3 (ITGAV/ITGB3) with moderate affinity. In Naja sagittifera (Andaman cobra), this protein is Cytotoxin sagitoxin.